Consider the following 178-residue polypeptide: Large ribosomal subunit protein uL6 (178 aa).

This sequence belongs to the universal ribosomal protein uL6 family. Part of the 50S ribosomal subunit.

In terms of biological role, this protein binds to the 23S rRNA, and is important in its secondary structure. It is located near the subunit interface in the base of the L7/L12 stalk, and near the tRNA binding site of the peptidyltransferase center. This Levilactobacillus brevis (strain ATCC 367 / BCRC 12310 / CIP 105137 / JCM 1170 / LMG 11437 / NCIMB 947 / NCTC 947) (Lactobacillus brevis) protein is Large ribosomal subunit protein uL6.